Reading from the N-terminus, the 225-residue chain is O-methyltransferase rstn1 (225 aa).

S-adenosyl-L-methionine-binding residues include Q97 and H142.

It belongs to the methyltransferase superfamily.

The enzyme catalyses desmethylrestrictinol + S-adenosyl-L-methionine = restrictinol + S-adenosyl-L-homocysteine + H(+). It participates in antifungal biosynthesis. In terms of biological role, O-methyltransferase; part of the gene cluster that mediates the biosynthesis of the tetrahydropyranyl antifungal agent restricticin that acts as an inhibitor of CYP51 and blocks the ergosterol biosynthesis. Within the pathway, rstn1 uses S-adenosylmethionine to methylate position C4 of desmethylrestrictinol to produce restrictinol. The highly reducing polyketide synthase rstn3, the short chain dehydrogenase rstn4, the cyclase rstn5, the FAD-dependent monooxygenase rstn6 and the enoylreductase rstn7 are required to generate the first stable intermediate desmethylrestrictinol. Rstn3 with rstn7 biosynthesize the first polyketide chain intermediate that is reduced by rstn4, followed by epoxidation by rstn6 before 6-endo cyclization via epoxide opening by rstn5 leads to desmethylrestrictinol. The methyltransferase rstn1 then catalyzes the C4 O-methylation of desmethylrestrictinol to produce restrictinol, and the nonribosomal peptide synthetase rstn8 catalyzes the C3 esterification of restrictinol with glycine that leads to restricticin. In Aspergillus nomiae NRRL (strain ATCC 15546 / NRRL 13137 / CBS 260.88 / M93), this protein is O-methyltransferase rstn1.